Here is a 330-residue protein sequence, read N- to C-terminus: T-cell leukemia homeobox protein 1 (330 aa).

The tract at residues 186-207 is disordered; it reads DRFTGHPYQNRTPPKKKKPRTS. Residues 201–260 constitute a DNA-binding region (homeobox); it reads KKKPRTSFTRLQICELEKRFHRQKYLASAERAALAKALKMTDAQVKTWFQNRRTKWRRQT. Residue Lys236 is modified to N6-acetyllysine.

As to quaternary structure, interacts with MEIS1, MEIS2, PBX1, PBX2 and PBX3.

Its subcellular location is the nucleus. In terms of biological role, controls the genesis of the spleen. Binds to the DNA sequence 5'-GGCGGTAAGTGG-3'. The chain is T-cell leukemia homeobox protein 1 (TLX1) from Homo sapiens (Human).